A 119-amino-acid polypeptide reads, in one-letter code: MPRVKGGIVTRRRHKKILKLAKGYFGSKHRLFKSANAQVMKSLLYAYRDRRQKKRDFRKLWITRINAQARMNGLSYSRLMHGLKVAGIEVNRKMLADLAVNDKAAFNELATVAKSKLNA.

It belongs to the bacterial ribosomal protein bL20 family.

Binds directly to 23S ribosomal RNA and is necessary for the in vitro assembly process of the 50S ribosomal subunit. It is not involved in the protein synthesizing functions of that subunit. This Brevibacillus brevis (strain 47 / JCM 6285 / NBRC 100599) protein is Large ribosomal subunit protein bL20.